Consider the following 516-residue polypeptide: Cytochrome P450 monooxygenase ntnM (516 aa).

The chain crosses the membrane as a helical span at residues 22–42 (IINVILSIAAIALIRALAISI). Cys-453 is a heme binding site.

The protein belongs to the cytochrome P450 family. The cofactor is heme.

Its subcellular location is the membrane. It participates in secondary metabolite biosynthesis; terpenoid biosynthesis. Functionally, cytochrome P450 monooxygenase; part of the gene cluster that mediates the biosynthesis of the meroterpenoids nectripenoids A and B, as well as cochliquninone D and isocochliquninone E. The pathway probably begins with the HR-PKS ntnH that catalyzes two chain-extension steps to form a reduced triketide, which then primes the SAT domain in the NR-PKS ntnG to initiate three more cycles of extension to give a linear hexaketide corresponding to the polyketide part of nectripenoids. The FAD-dependent monooxygenase ntnJ then performs an oxidative decarboxylation at C11 of the ntnH/ntnG product, via an electrophilic aromatic hydroxylation with concomitant ipso-decarboxylation. The membrane-bound polyprenyl transferase ntnF then introduces a farnesyl group before the FAD-dependent monooxygenase ntnK functions as the first epoxidase on terminal C12'-C13' olefin, followed by a second epoxidation on C7'-C8' catalyzed by ntnA. The terpene cyclase/mutase ntnI then initiates the sequential tricyclic ring formation through protonation of the terminal epoxide and catalyzes the regioselective and stereoselective 6/6/6-tricyclic ring formation. The cytochrome P450 monooxygenase ntnM may then hydroxylate C1'. The protein is Cytochrome P450 monooxygenase ntnM of Nectria sp.